The following is a 494-amino-acid chain: Cytochrome P450 2C23 (494 aa).

Ser-131 bears the Phosphoserine mark. 2 positions are modified to N6-acetyllysine: Lys-253 and Lys-379. Position 439 (Cys-439) interacts with heme.

This sequence belongs to the cytochrome P450 family. The cofactor is heme. As to expression, expressed in kidney and liver. Expressed in cortical tubules of kidney (at protein level).

The protein localises to the endoplasmic reticulum membrane. Its subcellular location is the microsome membrane. The enzyme catalyses (5Z,8Z,11Z,14Z)-eicosatetraenoate + reduced [NADPH--hemoprotein reductase] + O2 = (8R,9S)-epoxy-(5Z,11Z,14Z)-eicosatrienoate + oxidized [NADPH--hemoprotein reductase] + H2O + H(+). It catalyses the reaction (5Z,8Z,11Z,14Z)-eicosatetraenoate + reduced [NADPH--hemoprotein reductase] + O2 = (11R,12S)-epoxy-(5Z,8Z,14Z)-eicosatrienoate + oxidized [NADPH--hemoprotein reductase] + H2O + H(+). It carries out the reaction (5Z,8Z,11Z,14Z)-eicosatetraenoate + reduced [NADPH--hemoprotein reductase] + O2 = (11S,12R)-epoxy-(5Z,8Z,14Z)-eicosatrienoate + oxidized [NADPH--hemoprotein reductase] + H2O + H(+). The catalysed reaction is (5Z,8Z,11Z,14Z)-eicosatetraenoate + reduced [NADPH--hemoprotein reductase] + O2 = (14R,15S)-epoxy-(5Z,8Z,11Z)-eicosatrienoate + oxidized [NADPH--hemoprotein reductase] + H2O + H(+). The enzyme catalyses (5Z,8Z,11Z,14Z)-eicosatetraenoate + reduced [NADPH--hemoprotein reductase] + O2 = (14S,15R)-epoxy-(5Z,8Z,11Z)-eicosatrienoate + oxidized [NADPH--hemoprotein reductase] + H2O + H(+). It catalyses the reaction (5Z,8Z,11Z,14Z,17Z)-eicosapentaenoate + reduced [NADPH--hemoprotein reductase] + O2 = 8,9-epoxy-(5Z,11Z,14Z,17Z)-eicosatetraenoate + oxidized [NADPH--hemoprotein reductase] + H2O + H(+). It carries out the reaction (5Z,8Z,11Z,14Z,17Z)-eicosapentaenoate + reduced [NADPH--hemoprotein reductase] + O2 = 11,12-epoxy-(5Z,8Z,14Z,17Z)-eicosatetraenoate + oxidized [NADPH--hemoprotein reductase] + H2O + H(+). The catalysed reaction is (5Z,8Z,11Z,14Z,17Z)-eicosapentaenoate + reduced [NADPH--hemoprotein reductase] + O2 = 14,15-epoxy-(5Z,8Z,11Z,17Z)-eicosatetraenoate + oxidized [NADPH--hemoprotein reductase] + H2O + H(+). The enzyme catalyses (5Z,8Z,11Z,14Z,17Z)-eicosapentaenoate + reduced [NADPH--hemoprotein reductase] + O2 = (17R,18S)-epoxy-(5Z,8Z,11Z,14Z)-eicosatetraenoate + oxidized [NADPH--hemoprotein reductase] + H2O + H(+). It catalyses the reaction (5Z,8Z,11Z,14Z,17Z)-eicosapentaenoate + reduced [NADPH--hemoprotein reductase] + O2 = (17S,18R)-epoxy-(5Z,8Z,11Z,14Z)-eicosatetraenoate + oxidized [NADPH--hemoprotein reductase] + H2O + H(+). It carries out the reaction 20-hydroxy-(5Z,8Z,11Z,14Z)-eicosatetraenoate + reduced [NADPH--hemoprotein reductase] + O2 = 20-hydroxy-8,9-epoxy-(5Z,11Z,14Z)-eicosatrienoate + oxidized [NADPH--hemoprotein reductase] + H2O + H(+). Its pathway is lipid metabolism; arachidonate metabolism. A cytochrome P450 monooxygenase involved in polyunsaturated fatty acids (PUFAs) metabolism and signaling. Catalyzes preferentially the epoxidation of double bonds of PUFAs. Converts arachidonic acid (ARA, C20:4(n-6)) primarily to stereospecific products 8R,9S-, 11R,12S-, and 14S,15R-EET. Plays a major role in the formation of EETs and hydroxy-EETs (HEETs) in kidney. Via EETs may inhibit the epithelial sodium channels (ENaCs) in nephron segments, preventing excessive sodium absorption during high dietary salt intake. Participates in the formation of anti-inflammatory hydroxyepoxyeicosatrienoic acids (HEETs) by converting 20-hydroxyeicosatetraenoic acid (20-HETE) to 20,8,9-HEET, an activator of PPARA. Metabolizes eicosapentaenoic acid (EPA, C20:5(n-3)) to epoxyeicosatetraenoic acid (EETeTr) regioisomers, 8,9-, 11,12-, 14,15-, and 17,18-EETeTr, preferentially producing 17R,18S enantiomer. Mechanistically, uses molecular oxygen inserting one oxygen atom into a substrate, and reducing the second into a water molecule, with two electrons provided by NADPH via cytochrome P450 reductase (NADPH--hemoprotein reductase). This is Cytochrome P450 2C23 from Rattus norvegicus (Rat).